The sequence spans 451 residues: Putative metabolite transport protein YyaJ (451 aa).

Over 1 to 29 (MNTIFKQKNTHPFSNAANRLDRLPISRVH) the chain is Cytoplasmic. The chain crosses the membrane as a helical span at residues 30-50 (FQVLTALGIVYFFDLADLFTL). Residues 51–60 (SNVAPALIEH) are Extracellular-facing. Residues 61 to 81 (WGIPLSTIANVTAASFLGMFL) form a helical membrane-spanning segment. Topologically, residues 82 to 97 (GASLGGRLSDRIGRKK) are cytoplasmic. The helical transmembrane segment at 98-118 (ALNLFVFVFSIASLCNAAAWD) threads the bilayer. Topologically, residues 119–124 (IPSLMT) are extracellular. Residues 125 to 145 (FRFLTGFGVAAAMVITNSYLA) form a helical membrane-spanning segment. The Cytoplasmic segment spans residues 146–157 (EFFPSSVRGKYI). The helical transmembrane segment at 158-178 (SFCAMIGLIGVPITNIVSAFV) threads the bilayer. Residues 179 to 182 (IPLG) lie on the Extracellular side of the membrane. The chain crosses the membrane as a helical span at residues 183–203 (SWGWRLVFVWGAVGLIYFFFI). Residues 204–270 (HRLEESPRWH…LLKGRNLKIT (67 aa)) are Cytoplasmic-facing. Residues 271-291 (IVLSAVWIFETFGFYGFASWV) form a helical membrane-spanning segment. The Extracellular portion of the chain corresponds to 292–305 (PSLLKSNGVTMENT). A helical membrane pass occupies residues 306–326 (LWYNVLHSVGAPLGALLGSMI). Residues 327 to 333 (SERFQRK) are Cytoplasmic-facing. A helical transmembrane segment spans residues 334 to 354 (WILAASAFLTAIAGLLYGMTF). At 355–357 (IPI) the chain is on the extracellular side. A helical membrane pass occupies residues 358 to 378 (MIIVFGFIVNITERVFTSNLY). Residues 379 to 396 (AYTSEPYPTEYRSSGSGL) lie on the Cytoplasmic side of the membrane. Residues 397 to 417 (AYGLGRFSNIFGSLLVGFIAV) form a helical membrane-spanning segment. The Extracellular segment spans residues 418–421 (QLGY). The helical transmembrane segment at 422 to 442 (ISVFLFIGGCWLACSLLLIFF) threads the bilayer. The Cytoplasmic segment spans residues 443–451 (GPNTNAKQI).

The protein belongs to the major facilitator superfamily. Sugar transporter (TC 2.A.1.1) family.

Its subcellular location is the cell membrane. The chain is Putative metabolite transport protein YyaJ (yyaJ) from Bacillus subtilis (strain 168).